The sequence spans 435 residues: MTEITLTAPKRLRGVIQVPGDKSISHRSVLLNAIATGSAHITNFLPGADCLSSVACVRSLGVTVEQPHERELIIHGVGLGGLRESTDVLDCGNSGTTLRLLAGILSGQPFFSVLSGDSSLRSRPQRRVVGPLRAMGAQIDGRADGDRAPLAIRGSTLRGGQYELTIASAQVKSALLLAALYADGPLTLGGRIDSRDHTERMLAAMGVEITVSPDRITLHPPTAATAPVALSLRVPGDPSSAAFWWVAAAIHPDAELVTPGVCLNPTRTGALDVLRAMGAEIEIMNERLEGSELVGDVVVRSSVLRGTTIAGSLIPRLIDEIPVLAVAAACADGETVIRDAQELRAKETDRITTVAAGLSALGVTVEPTIDGMVITGKPDQLTGATLHSYHDHRLAMAWAVAALVARGETTIVEPAAVVISYPDFWQTLAAIQEDV.

3-phosphoshikimate-binding residues include lysine 22, serine 23, and arginine 27. Residue lysine 22 participates in phosphoenolpyruvate binding. Glycine 95 and arginine 123 together coordinate phosphoenolpyruvate. Residues serine 168, glutamine 170, aspartate 319, and lysine 346 each contribute to the 3-phosphoshikimate site. Phosphoenolpyruvate is bound at residue glutamine 170. Aspartate 319 (proton acceptor) is an active-site residue. Phosphoenolpyruvate-binding residues include arginine 350 and arginine 393.

Belongs to the EPSP synthase family. Monomer.

The protein localises to the cytoplasm. It catalyses the reaction 3-phosphoshikimate + phosphoenolpyruvate = 5-O-(1-carboxyvinyl)-3-phosphoshikimate + phosphate. It participates in metabolic intermediate biosynthesis; chorismate biosynthesis; chorismate from D-erythrose 4-phosphate and phosphoenolpyruvate: step 6/7. Functionally, catalyzes the transfer of the enolpyruvyl moiety of phosphoenolpyruvate (PEP) to the 5-hydroxyl of shikimate-3-phosphate (S3P) to produce enolpyruvyl shikimate-3-phosphate and inorganic phosphate. This chain is 3-phosphoshikimate 1-carboxyvinyltransferase, found in Chloroflexus aggregans (strain MD-66 / DSM 9485).